Consider the following 149-residue polypeptide: D-aminoacyl-tRNA deacylase (149 aa).

Residues 137–138 (GP) carry the Gly-cisPro motif, important for rejection of L-amino acids motif.

The protein belongs to the DTD family. In terms of assembly, homodimer.

The protein resides in the cytoplasm. The catalysed reaction is glycyl-tRNA(Ala) + H2O = tRNA(Ala) + glycine + H(+). It catalyses the reaction a D-aminoacyl-tRNA + H2O = a tRNA + a D-alpha-amino acid + H(+). Its function is as follows. An aminoacyl-tRNA editing enzyme that deacylates mischarged D-aminoacyl-tRNAs. Also deacylates mischarged glycyl-tRNA(Ala), protecting cells against glycine mischarging by AlaRS. Acts via tRNA-based rather than protein-based catalysis; rejects L-amino acids rather than detecting D-amino acids in the active site. By recycling D-aminoacyl-tRNA to D-amino acids and free tRNA molecules, this enzyme counteracts the toxicity associated with the formation of D-aminoacyl-tRNA entities in vivo and helps enforce protein L-homochirality. The chain is D-aminoacyl-tRNA deacylase from Thermosipho africanus (strain TCF52B).